We begin with the raw amino-acid sequence, 1032 residues long: Integrin alpha-4 (1032 aa).

The first 33 residues, 1-33 (MAWEARREPGPRRAAVRETVMLLLCLGVPTGRP), serve as a signal peptide directing secretion. 7 FG-GAP repeats span residues 35–100 (NVDT…PGQT), 110–177 (NGEP…TELS), 185–237 (QDYV…KYKA), 238–291 (FLDK…EKEL), 292–351 (NILH…GAVM), 355–412 (ETNL…GISS), and 416–478 (QRIE…HPES). The Extracellular segment spans residues 35–977 (NVDTESALLY…HHQRPKRYFT (943 aa)). Asn79 carries an N-linked (GlcNAc...) asparagine glycan. A disulfide bridge connects residues Cys91 and Cys101. Asn138 is a glycosylation site (N-linked (GlcNAc...) asparagine). 2 disulfides stabilise this stretch: Cys144–Cys165 and Cys183–Cys198. N-linked (GlcNAc...) asparagine glycosylation is present at Asn229. Residues Asp314, Asn316, Asp318, Asp322, Asp377, Asp379, Asp381, Asp385, Asp439, Asp441, Asn443, Tyr445, and Asp447 each contribute to the Ca(2+) site. Asn480 carries an N-linked (GlcNAc...) asparagine glycan. 2 cysteine pairs are disulfide-bonded: Cys486–Cys495 and Cys501–Cys557. Residues Asn518 and Asn538 are each glycosylated (N-linked (GlcNAc...) asparagine). Positions 606–616 (KKEKDIMKKTI) match the SG1 motif. Cys622 and Cys627 form a disulfide bridge. Residues Asn626, Asn645, and Asn660 are each glycosylated (N-linked (GlcNAc...) asparagine). An intrachain disulfide couples Cys698 to Cys711. N-linked (GlcNAc...) asparagine glycosylation is found at Asn806 and Asn821. 2 disulfides stabilise this stretch: Cys852–Cys890 and Cys897–Cys902. The helical transmembrane segment at 978 to 1001 (IVIISSSLLLGLIVLLLISYVMWK) threads the bilayer. The Cytoplasmic segment spans residues 1002–1032 (AGFFKRQYKSILQEENRRDSWSYINSKSNDD). The GFFKR motif motif lies at 1003-1007 (GFFKR). Ser1021 bears the Phosphoserine mark.

Belongs to the integrin alpha chain family. As to quaternary structure, heterodimer of an alpha and a beta subunit. The alpha subunit can sometimes be cleaved into two non-covalently associated fragments. Alpha-4 associates with either beta-1 or beta-7. Alpha-4 interacts with PXN, LPXN, and TGFB1I1/HIC5. Interacts with CSPG4 through CSPG4 chondroitin sulfate glycosaminoglycan. Interacts with JAML; integrin alpha-4/beta-1 may regulate leukocyte to endothelial cells adhesion by controlling JAML homodimerization. ITGA4:ITGB1 is found in a ternary complex with CX3CR1 and CX3CL1. Interacts with MDK. ITGA4:ITGB1 interacts with MDK; this interaction mediates MDK-induced osteoblast cells migration through PXN phosphorylation. Integrin ITGA4:ITGB1 interacts with SVEP1 (via Sushi domain 21); thereby inhibits Ca(2+) intracellular signaling and as a result represses vasocontraction. ITGA4:ITGB1 interacts with SELP. ITGA4:ITGB1 interacts with BCAM. Post-translationally, phosphorylation on Ser-1027 inhibits PXN binding. As to expression, expressed in vascular smooth muscle cells (at protein level).

It localises to the membrane. Its function is as follows. Integrins alpha-4/beta-1 (VLA-4) and alpha-4/beta-7 are receptors for fibronectin. They recognize one or more domains within the alternatively spliced CS-1 and CS-5 regions of fibronectin. They are also receptors for VCAM1. Integrin alpha-4/beta-1 recognizes the sequence Q-I-D-S in VCAM1. Integrin alpha-4/beta-7 is also a receptor for MADCAM1. It recognizes the sequence L-D-T in MADCAM1. On activated endothelial cells integrin VLA-4 triggers homotypic aggregation for most VLA-4-positive leukocyte cell lines. It may also participate in cytolytic T-cell interactions with target cells. ITGA4:ITGB1 binds to fractalkine (CX3CL1) and may act as its coreceptor in CX3CR1-dependent fractalkine signaling. ITGA4:ITGB1 binds to PLA2G2A via a site (site 2) which is distinct from the classical ligand-binding site (site 1) and this induces integrin conformational changes and enhanced ligand binding to site 1. Integrin ITGA4:ITGB1 represses PRKCA-mediated L-type voltage-gated channel Ca(2+) influx and ROCK-mediated calcium sensitivity in vascular smooth muscle cells via its interaction with SVEP1, thereby inhibiting vasocontraction. This is Integrin alpha-4 (ITGA4) from Homo sapiens (Human).